A 211-amino-acid chain; its full sequence is 2,3-bisphosphoglycerate-dependent phosphoglycerate mutase (211 aa).

Residues 9-16 (RHGQSEWN), 22-23 (TG), arginine 61, 88-91 (ERDY), lysine 99, 115-116 (RR), and 159-160 (GN) each bind substrate. Histidine 10 (tele-phosphohistidine intermediate) is an active-site residue. Catalysis depends on glutamate 88, which acts as the Proton donor/acceptor.

This sequence belongs to the phosphoglycerate mutase family. BPG-dependent PGAM subfamily. Homodimer.

It catalyses the reaction (2R)-2-phosphoglycerate = (2R)-3-phosphoglycerate. It participates in carbohydrate degradation; glycolysis; pyruvate from D-glyceraldehyde 3-phosphate: step 3/5. Functionally, catalyzes the interconversion of 2-phosphoglycerate and 3-phosphoglycerate. The chain is 2,3-bisphosphoglycerate-dependent phosphoglycerate mutase from Sinorhizobium fredii (strain NBRC 101917 / NGR234).